Here is a 283-residue protein sequence, read N- to C-terminus: MSWLNKVRNALPFTPKRDTPDNLWIKCPSCSEMLFTKEYEDNLSVCPHCDHHGRIGANARLEQLLDAGYELLPAPKVKEDPLKFRDTKKYVDRIKAARAANPHPDALTNAFGRIEGQKAVVGVQEFAFMGGSMGMAVGNAFVAGTERAIKEKCPYVAVTAAGGARMQEGILSLMQMPRSTVAISRLHAAGLPYIVVLTDPTTGGVTASYAMLGDVQIAEPGALIGFAGQRVIQDTIREKLPEGFQRAEYLHAHGMIDMVTHRRDLKTTLAQVIDFLMAGKAAA.

Residues 23-283 (LWIKCPSCSE…DFLMAGKAAA (261 aa)) form the CoA carboxyltransferase N-terminal domain. Zn(2+) contacts are provided by Cys27, Cys30, Cys46, and Cys49. The C4-type zinc-finger motif lies at 27–49 (CPSCSEMLFTKEYEDNLSVCPHC).

It belongs to the AccD/PCCB family. In terms of assembly, acetyl-CoA carboxylase is a heterohexamer composed of biotin carboxyl carrier protein (AccB), biotin carboxylase (AccC) and two subunits each of ACCase subunit alpha (AccA) and ACCase subunit beta (AccD). Requires Zn(2+) as cofactor.

Its subcellular location is the cytoplasm. The catalysed reaction is N(6)-carboxybiotinyl-L-lysyl-[protein] + acetyl-CoA = N(6)-biotinyl-L-lysyl-[protein] + malonyl-CoA. It functions in the pathway lipid metabolism; malonyl-CoA biosynthesis; malonyl-CoA from acetyl-CoA: step 1/1. Functionally, component of the acetyl coenzyme A carboxylase (ACC) complex. Biotin carboxylase (BC) catalyzes the carboxylation of biotin on its carrier protein (BCCP) and then the CO(2) group is transferred by the transcarboxylase to acetyl-CoA to form malonyl-CoA. This is Acetyl-coenzyme A carboxylase carboxyl transferase subunit beta from Novosphingobium aromaticivorans (strain ATCC 700278 / DSM 12444 / CCUG 56034 / CIP 105152 / NBRC 16084 / F199).